The following is a 396-amino-acid chain: Dimethyladenosine transferase 2, mitochondrial (396 aa).

The N-terminal 43 residues, 1–43, are a transit peptide targeting the mitochondrion; it reads MRGPAMRLPPRIALSALARGPSCILGSGAATRKDWQTRNRRGF. The segment at 43 to 71 is disordered; that stretch reads FSDFNIEPLPDSDLEESSPWTSRNRSEPT. I74, E123, and D149 together coordinate S-adenosyl-L-methionine. A DNA-binding region spans residues 328 to 329; sequence KR.

This sequence belongs to the class I-like SAM-binding methyltransferase superfamily. rRNA adenine N(6)-methyltransferase family. KsgA subfamily. As to quaternary structure, homodimer. Component of the mitochondrial transcription initiation complex, composed at least of TFB2M, TFAM and POLRMT. In this complex TFAM recruits POLRMT to the promoter whereas TFB2M induces structural changes in POLRMT to enable promoter opening and trapping of the DNA non-template strand. Interacts with mitochondrial RNA polymerase POLRMT. Interacts with TFAM. In terms of tissue distribution, ubiquitously expressed.

The protein resides in the mitochondrion. The catalysed reaction is adenosine in rRNA + S-adenosyl-L-methionine = N(6)-methyladenosine in rRNA + S-adenosyl-L-homocysteine + H(+). Functionally, S-adenosyl-L-methionine-dependent rRNA methyltransferase which may methylate two specific adjacent adenosines in the loop of a conserved hairpin near the 3'-end of 12S mitochondrial rRNA. Component of the mitochondrial transcription initiation complex, composed at least of TFB2M, TFAM and POLRMT that is required for basal transcription of mitochondrial DNA. In this complex, TFAM recruits POLRMT to a specific promoter whereas TFB2M induces structural changes in POLRMT to enable promoter opening and trapping of the DNA non-template strand. Stimulates transcription independently of the methyltransferase activity. This is Dimethyladenosine transferase 2, mitochondrial from Mus musculus (Mouse).